The primary structure comprises 184 residues: ATP synthase subunit b (184 aa).

Residues 15 to 34 (VQPGLIFWTLVTFVIAAVVL) form a helical membrane-spanning segment.

Belongs to the ATPase B chain family. In terms of assembly, F-type ATPases have 2 components, F(1) - the catalytic core - and F(0) - the membrane proton channel. F(1) has five subunits: alpha(3), beta(3), gamma(1), delta(1), epsilon(1). F(0) has three main subunits: a(1), b(2) and c(10-14). The alpha and beta chains form an alternating ring which encloses part of the gamma chain. F(1) is attached to F(0) by a central stalk formed by the gamma and epsilon chains, while a peripheral stalk is formed by the delta and b chains.

Its subcellular location is the cell inner membrane. Functionally, f(1)F(0) ATP synthase produces ATP from ADP in the presence of a proton or sodium gradient. F-type ATPases consist of two structural domains, F(1) containing the extramembraneous catalytic core and F(0) containing the membrane proton channel, linked together by a central stalk and a peripheral stalk. During catalysis, ATP synthesis in the catalytic domain of F(1) is coupled via a rotary mechanism of the central stalk subunits to proton translocation. Component of the F(0) channel, it forms part of the peripheral stalk, linking F(1) to F(0). The protein is ATP synthase subunit b of Myxococcus xanthus (strain DK1622).